Reading from the N-terminus, the 346-residue chain is MPLVEAVTASSPSLADLGWSEFFGDQLEASDANLIPTRIAMVHRDRLSGLSQTGQTDLSLAPQATTGDYAVGDWVLVEPHSHLVQRRLTRKTVLERRVQGGRGPQLAAANVDTLFIVTSCNADFNIARLERYLALANEAGTTPVILLTKADTAEDAEAYRKQAAALQRELAVVTLNPRIPGAASALAAWCGAGQTVALIGSSGVGKSTLVNTLAGSAQQSPQQTGAIREHDAKGRHTTTARSLHAIAGGGWVIDTPGMRTLQVSDVGYGIDTLFAEITELAPLCKFRDCTHVHEPGCAVQAALKAGTLDPERLARWRKLSDENQHNTPVQSGPRGAKSPAGRGKRR.

The CP-type G domain maps to 98-261 (VQGGRGPQLA…VIDTPGMRTL (164 aa)). GTP-binding positions include 148 to 151 (TKAD) and 200 to 208 (GSSGVGKST). 4 residues coordinate Zn(2+): Cys-284, Cys-289, His-291, and Cys-297. Positions 317–346 (RKLSDENQHNTPVQSGPRGAKSPAGRGKRR) are disordered.

This sequence belongs to the TRAFAC class YlqF/YawG GTPase family. RsgA subfamily. As to quaternary structure, monomer. Associates with 30S ribosomal subunit, binds 16S rRNA. It depends on Zn(2+) as a cofactor.

It localises to the cytoplasm. In terms of biological role, one of several proteins that assist in the late maturation steps of the functional core of the 30S ribosomal subunit. Helps release RbfA from mature subunits. May play a role in the assembly of ribosomal proteins into the subunit. Circularly permuted GTPase that catalyzes slow GTP hydrolysis, GTPase activity is stimulated by the 30S ribosomal subunit. The sequence is that of Small ribosomal subunit biogenesis GTPase RsgA from Mesorhizobium japonicum (strain LMG 29417 / CECT 9101 / MAFF 303099) (Mesorhizobium loti (strain MAFF 303099)).